The sequence spans 172 residues: Odorant-binding protein (172 aa).

An N-terminal signal peptide occupies residues 1 to 15 (MVKFLLIVLALGVSC). 2 disulfide bridges follow: Cys60/Cys64 and Cys79/Cys170.

It belongs to the calycin superfamily. Lipocalin family. In terms of assembly, homodimer.

It localises to the secreted. This protein is found in nasal epithelium and it binds a wide variety of chemical odorants. The chain is Odorant-binding protein (Obp1f) from Rattus norvegicus (Rat).